A 217-amino-acid chain; its full sequence is Pyridoxine/pyridoxamine 5'-phosphate oxidase (217 aa).

Residues 13–16 and Lys71 each bind substrate; that span reads RREY. FMN contacts are provided by residues 66–71, 81–82, Arg87, Lys88, and Gln110; these read RIVLLK and YT. Positions 128, 132, and 136 each coordinate substrate. FMN is bound by residues 145-146 and Trp190; that span reads QS. 196–198 contacts substrate; that stretch reads RLH. Residue Arg200 coordinates FMN.

This sequence belongs to the pyridoxamine 5'-phosphate oxidase family. In terms of assembly, homodimer. FMN is required as a cofactor.

The enzyme catalyses pyridoxamine 5'-phosphate + O2 + H2O = pyridoxal 5'-phosphate + H2O2 + NH4(+). The catalysed reaction is pyridoxine 5'-phosphate + O2 = pyridoxal 5'-phosphate + H2O2. The protein operates within cofactor metabolism; pyridoxal 5'-phosphate salvage; pyridoxal 5'-phosphate from pyridoxamine 5'-phosphate: step 1/1. It functions in the pathway cofactor metabolism; pyridoxal 5'-phosphate salvage; pyridoxal 5'-phosphate from pyridoxine 5'-phosphate: step 1/1. Catalyzes the oxidation of either pyridoxine 5'-phosphate (PNP) or pyridoxamine 5'-phosphate (PMP) into pyridoxal 5'-phosphate (PLP). In Proteus mirabilis (strain HI4320), this protein is Pyridoxine/pyridoxamine 5'-phosphate oxidase.